We begin with the raw amino-acid sequence, 701 residues long: Potassium-transporting ATPase ATP-binding subunit 1 (701 aa).

The disordered stretch occupies residues 1-26 (MNPVAPTRKVKPPRNRPSDRRQARKK). The next 4 membrane-spanning stretches (helical) occupy residues 57–77 (MFVV…PDLF), 90–110 (GLLT…EAVA), 241–261 (VALT…IATL), and 278–298 (IALL…AIGI). D329 serves as the catalytic 4-aspartylphosphate intermediate. Residues D366, E370, 397–404 (FSAKTRMS), and K416 each bind ATP. Residues D539 and D543 each coordinate Mg(2+). Helical transmembrane passes span 599–619 (FSIA…FAAA), 635–655 (AVLS…PLAL), and 681–701 (VIAP…VGLA).

This sequence belongs to the cation transport ATPase (P-type) (TC 3.A.3) family. Type IA subfamily. As to quaternary structure, the system is composed of three essential subunits: KdpA, KdpB and KdpC.

It localises to the cell inner membrane. The enzyme catalyses K(+)(out) + ATP + H2O = K(+)(in) + ADP + phosphate + H(+). In terms of biological role, part of the high-affinity ATP-driven potassium transport (or Kdp) system, which catalyzes the hydrolysis of ATP coupled with the electrogenic transport of potassium into the cytoplasm. This subunit is responsible for energy coupling to the transport system and for the release of the potassium ions to the cytoplasm. The protein is Potassium-transporting ATPase ATP-binding subunit 1 of Nostoc sp. (strain PCC 7120 / SAG 25.82 / UTEX 2576).